A 460-amino-acid chain; its full sequence is A-type ATP synthase subunit B (460 aa).

Belongs to the ATPase alpha/beta chains family. Has multiple subunits with at least A(3), B(3), C, D, E, F, H, I and proteolipid K(x).

It localises to the cell membrane. Functionally, component of the A-type ATP synthase that produces ATP from ADP in the presence of a proton gradient across the membrane. The B chain is a regulatory subunit. The chain is A-type ATP synthase subunit B from Thermoplasma acidophilum (strain ATCC 25905 / DSM 1728 / JCM 9062 / NBRC 15155 / AMRC-C165).